The chain runs to 524 residues: Alkaline phosphatase, tissue-nonspecific isozyme (524 aa).

A signal peptide spans 1–17 (MISPFLVLAIGTCLTNS). A Mg(2+)-binding site is contributed by aspartate 60. Residues aspartate 60 and serine 110 each coordinate Zn(2+). Serine 110 serves as the catalytic Phosphoserine intermediate. A Phosphoserine modification is found at serine 110. Cysteine 139 and cysteine 201 form a disulfide bridge. An N-linked (GlcNAc...) asparagine glycan is attached at asparagine 140. Threonine 173 is a binding site for Mg(2+). N-linked (GlcNAc...) asparagine glycosylation occurs at asparagine 230. Ca(2+) is bound at residue glutamate 235. Residue asparagine 271 is glycosylated (N-linked (GlcNAc...) asparagine). Ca(2+) is bound by residues phenylalanine 290 and glutamate 291. Asparagine 303 carries an N-linked (GlcNAc...) asparagine glycan. Aspartate 306 provides a ligand contact to Ca(2+). Position 332 (glutamate 332) interacts with Mg(2+). The Zn(2+) site is built by aspartate 337, histidine 341, aspartate 378, and histidine 379. Residue asparagine 430 is glycosylated (N-linked (GlcNAc...) asparagine). Histidine 454 contributes to the Zn(2+) binding site. Cysteine 489 and cysteine 497 form a disulfide bridge. Glycine 501 carries GPI-anchor amidated glycine lipidation. The propeptide at 502 to 524 (SGSAPSPGALLLPLAVLSLRTLF) is removed in mature form.

The protein belongs to the alkaline phosphatase family. Homodimer. It depends on Mg(2+) as a cofactor. The cofactor is Zn(2+). Ca(2+) is required as a cofactor. In terms of processing, N-glycosylated. As to expression, widely expressed. Expressed in DRG neurons and spinal cord neurons.

It is found in the cell membrane. The protein resides in the extracellular vesicle membrane. The protein localises to the mitochondrion membrane. Its subcellular location is the mitochondrion intermembrane space. The enzyme catalyses a phosphate monoester + H2O = an alcohol + phosphate. The catalysed reaction is diphosphate + H2O = 2 phosphate + H(+). It carries out the reaction pyridoxal 5'-phosphate + H2O = pyridoxal + phosphate. It catalyses the reaction phosphoethanolamine + H2O = ethanolamine + phosphate. The enzyme catalyses N-phosphocreatine + H2O = creatine + phosphate. The catalysed reaction is ATP + H2O = ADP + phosphate + H(+). It carries out the reaction ADP + H2O = AMP + phosphate + H(+). It catalyses the reaction AMP + H2O = adenosine + phosphate. With respect to regulation, phosphatase activity is specifically inhibited by 5-((5-chloro-2-methoxyphenyl)sulfonamido)nicotinamide (SBI-425). Its function is as follows. Alkaline phosphatase that metabolizes various phosphate compounds and plays a key role in skeletal mineralization and adaptive thermogenesis. Has broad substrate specificity and can hydrolyze a considerable variety of compounds: however, only a few substrates, such as diphosphate (inorganic pyrophosphate; PPi), pyridoxal 5'-phosphate (PLP) and N-phosphocreatine are natural substrates. Plays an essential role in skeletal and dental mineralization via its ability to hydrolyze extracellular diphosphate, a potent mineralization inhibitor, to phosphate: it thereby promotes hydroxyapatite crystal formation and increases inorganic phosphate concentration. Acts in a non-redundant manner with PHOSPHO1 in skeletal mineralization: while PHOSPHO1 mediates the initiation of hydroxyapatite crystallization in the matrix vesicles (MVs), ALPL/TNAP catalyzes the spread of hydroxyapatite crystallization in the extracellular matrix. Also promotes dephosphorylation of osteopontin (SSP1), an inhibitor of hydroxyapatite crystallization in its phosphorylated state; it is however unclear whether ALPL/TNAP mediates SSP1 dephosphorylation via a direct or indirect manner. Catalyzes dephosphorylation of PLP to pyridoxal (PL), the transportable form of vitamin B6, in order to provide a sufficient amount of PLP in the brain, an essential cofactor for enzymes catalyzing the synthesis of diverse neurotransmitters. Additionally, also able to mediate ATP degradation in a stepwise manner to adenosine, thereby regulating the availability of ligands for purinergic receptors. Also capable of dephosphorylating microbial products, such as lipopolysaccharides (LPS) as well as other phosphorylated small-molecules, such as poly-inosine:cytosine (poly I:C). Acts as a key regulator of adaptive thermogenesis as part of the futile creatine cycle: localizes to the mitochondria of thermogenic fat cells and acts by mediating hydrolysis of N-phosphocreatine to initiate a futile cycle of creatine dephosphorylation and phosphorylation. During the futile creatine cycle, creatine and N-phosphocreatine are in a futile cycle, which dissipates the high energy charge of N-phosphocreatine as heat without performing any mechanical or chemical work. The sequence is that of Alkaline phosphatase, tissue-nonspecific isozyme from Mus musculus (Mouse).